The primary structure comprises 173 residues: CDP-archaeol synthase (173 aa).

The next 5 membrane-spanning stretches (helical) occupy residues 15 to 35, 59 to 79, 84 to 104, 118 to 138, and 142 to 162; these read GLWF…FGGG, GFIV…LVVG, AGDG…GSFV, VLDQ…VYGW, and GWVL…TNVI.

The protein belongs to the CDP-archaeol synthase family. Mg(2+) serves as cofactor.

The protein resides in the cell membrane. The enzyme catalyses 2,3-bis-O-(geranylgeranyl)-sn-glycerol 1-phosphate + CTP + H(+) = CDP-2,3-bis-O-(geranylgeranyl)-sn-glycerol + diphosphate. It participates in membrane lipid metabolism; glycerophospholipid metabolism. In terms of biological role, catalyzes the formation of CDP-2,3-bis-(O-geranylgeranyl)-sn-glycerol (CDP-archaeol) from 2,3-bis-(O-geranylgeranyl)-sn-glycerol 1-phosphate (DGGGP) and CTP. This reaction is the third ether-bond-formation step in the biosynthesis of archaeal membrane lipids. The protein is CDP-archaeol synthase of Methanopyrus kandleri (strain AV19 / DSM 6324 / JCM 9639 / NBRC 100938).